The sequence spans 217 residues: Large ribosomal subunit protein uL3 (217 aa).

The interval 129 to 161 (SRGPMSHGSKNHRAPGSTGAGTTPGRIYPGKRM) is disordered. Low complexity predominate over residues 142–153 (APGSTGAGTTPG).

It belongs to the universal ribosomal protein uL3 family. As to quaternary structure, part of the 50S ribosomal subunit. Forms a cluster with proteins L14 and L19.

Its function is as follows. One of the primary rRNA binding proteins, it binds directly near the 3'-end of the 23S rRNA, where it nucleates assembly of the 50S subunit. The chain is Large ribosomal subunit protein uL3 from Prochlorococcus marinus (strain MIT 9515).